The sequence spans 330 residues: Geranylgeranyl diphosphate synthase (330 aa).

3 residues coordinate isopentenyl diphosphate: Lys43, Arg46, and His75. Residues Asp82 and Asp86 each coordinate Mg(2+). Residue Arg91 coordinates an all-trans-polyprenyl diphosphate. An isopentenyl diphosphate-binding site is contributed by Arg92. An all-trans-polyprenyl diphosphate contacts are provided by Lys175, Thr176, Gln213, Lys230, and Lys240.

It belongs to the FPP/GGPP synthase family. Mg(2+) serves as cofactor.

It catalyses the reaction isopentenyl diphosphate + (2E,6E)-farnesyl diphosphate = (2E,6E,10E)-geranylgeranyl diphosphate + diphosphate. Its pathway is isoprenoid biosynthesis; geranylgeranyl diphosphate biosynthesis; geranylgeranyl diphosphate from farnesyl diphosphate and isopentenyl diphosphate: step 1/1. In terms of biological role, catalyzes the condensation of isopentenyl pyrophosphate with the allylic pyrophosphates to yield geranylgeranyl diphosphate (GGPP) which is a precursor of the ether-linked lipids. It is able to use dimethylallyl diphosphate (DMAPP), geranyl diphosphate (GPP), and (all-E)-geranyl diphosphate (E-FPP) as an allylic substrate. The sequence is that of Geranylgeranyl diphosphate synthase (gds) from Sulfolobus acidocaldarius (strain ATCC 33909 / DSM 639 / JCM 8929 / NBRC 15157 / NCIMB 11770).